Here is a 301-residue protein sequence, read N- to C-terminus: Ribosomal RNA small subunit methyltransferase H (301 aa).

S-adenosyl-L-methionine-binding positions include 31 to 33 (GGY), aspartate 49, phenylalanine 76, aspartate 97, and glutamine 104.

The protein belongs to the methyltransferase superfamily. RsmH family.

The protein resides in the cytoplasm. The catalysed reaction is cytidine(1402) in 16S rRNA + S-adenosyl-L-methionine = N(4)-methylcytidine(1402) in 16S rRNA + S-adenosyl-L-homocysteine + H(+). Specifically methylates the N4 position of cytidine in position 1402 (C1402) of 16S rRNA. The sequence is that of Ribosomal RNA small subunit methyltransferase H from Ehrlichia ruminantium (strain Welgevonden).